Here is a 189-residue protein sequence, read N- to C-terminus: Adenylate kinase homolog MTH_1663 (189 aa).

An ATP-binding site is contributed by 12–20; sequence GVPGTGKTT.

Belongs to the archaeal adenylate kinase family.

In Methanothermobacter thermautotrophicus (strain ATCC 29096 / DSM 1053 / JCM 10044 / NBRC 100330 / Delta H) (Methanobacterium thermoautotrophicum), this protein is Adenylate kinase homolog MTH_1663.